A 123-amino-acid chain; its full sequence is Small ribosomal subunit protein uS12 (123 aa).

Residues 1-32 (MPTINQLIRKPREAQKARDKAPALQSSPQKRG) are disordered. A compositionally biased stretch (basic and acidic residues) spans 10-21 (KPREAQKARDKA). Asp-89 carries the post-translational modification 3-methylthioaspartic acid.

It belongs to the universal ribosomal protein uS12 family. Part of the 30S ribosomal subunit. Contacts proteins S8 and S17. May interact with IF1 in the 30S initiation complex.

Functionally, with S4 and S5 plays an important role in translational accuracy. Interacts with and stabilizes bases of the 16S rRNA that are involved in tRNA selection in the A site and with the mRNA backbone. Located at the interface of the 30S and 50S subunits, it traverses the body of the 30S subunit contacting proteins on the other side and probably holding the rRNA structure together. The combined cluster of proteins S8, S12 and S17 appears to hold together the shoulder and platform of the 30S subunit. The polypeptide is Small ribosomal subunit protein uS12 (Azorhizobium caulinodans (strain ATCC 43989 / DSM 5975 / JCM 20966 / LMG 6465 / NBRC 14845 / NCIMB 13405 / ORS 571)).